Consider the following 92-residue polypeptide: RNA-binding protein Hfq (92 aa).

The region spanning 9–68 is the Sm domain; sequence DPFLNALRRERVPVSIYLVNGIKLQGQVESFDQFVILLKNTVSQMVYKHAISTVVPSRPF.

The protein belongs to the Hfq family. Homohexamer.

Functionally, RNA chaperone that binds small regulatory RNA (sRNAs) and mRNAs to facilitate mRNA translational regulation in response to envelope stress, environmental stress and changes in metabolite concentrations. Also binds with high specificity to tRNAs. This is RNA-binding protein Hfq from Shewanella piezotolerans (strain WP3 / JCM 13877).